The sequence spans 198 residues: Na(+)-translocating NADH-quinone reductase subunit E (198 aa).

6 helical membrane passes run 11–31 (SIFI…FLAV), 39–59 (FGLG…NNLV), 77–97 (FLNF…LEMV), 110–130 (GIFL…SFMV), 140–160 (IVYG…LAGI), and 176–196 (LGIT…FSGV).

It belongs to the NqrDE/RnfAE family. Composed of six subunits; NqrA, NqrB, NqrC, NqrD, NqrE and NqrF.

The protein localises to the cell inner membrane. It catalyses the reaction a ubiquinone + n Na(+)(in) + NADH + H(+) = a ubiquinol + n Na(+)(out) + NAD(+). Its function is as follows. NQR complex catalyzes the reduction of ubiquinone-1 to ubiquinol by two successive reactions, coupled with the transport of Na(+) ions from the cytoplasm to the periplasm. NqrA to NqrE are probably involved in the second step, the conversion of ubisemiquinone to ubiquinol. The chain is Na(+)-translocating NADH-quinone reductase subunit E from Aliivibrio salmonicida (strain LFI1238) (Vibrio salmonicida (strain LFI1238)).